Reading from the N-terminus, the 500-residue chain is MNLIKLFIICCLLISITVKSFEIENDIDIDFEFDNSFDQSSSSAGSGSDSYDQDKCKGKPNPYPIFNKEPIFIASTANGKLYKTGDDSNQVSILHLYGEAYEMGYAHGTLLKEQVNELIPKFMEFAEIAIKEFIKTKFALRLPEFLIKLIEEFGVNAALDYVASATEQFTPKRFFNELLGLSDSSGIPYQTLLRMHMFPELVKATCSIVGAWSEATINGGLLQVRALDWGLENPLVNYPTLIVYHPQENDGGEFSILSWTSFIGALTGYSQRTGVCEKVWLSYNGTYTHNGMPFYFILRDILQYDNSIYEALNRIYNTPRTCAVYLGVGSNESNTASLLEVSMDVVRVFDDETPFPGFAPPVPEHPLFKDVVYVDKHSQPSTDPCMANSLSQSWSEITAQTLINTMGQMETGDLHSAVYDFKQNLVYVSVATTNIPFPFTNETLPLVSPAYKNQFIQFNMTKLFSEQPPLPPPNNSSSSDSNSNSNSDSSSSSDSNSNSN.

The N-terminal stretch at 1 to 20 (MNLIKLFIICCLLISITVKS) is a signal peptide. N-linked (GlcNAc...) asparagine glycosylation is found at Asn-284, Asn-331, Asn-441, Asn-459, Asn-474, and Asn-475. The disordered stretch occupies residues 464 to 500 (FSEQPPLPPPNNSSSSDSNSNSNSDSSSSSDSNSNSN). The span at 475 to 500 (NSSSSDSNSNSNSDSSSSSDSNSNSN) shows a compositional bias: low complexity.

It is found in the secreted. The sequence is that of Protein dcd1B (dcd1B) from Dictyostelium discoideum (Social amoeba).